The chain runs to 370 residues: Biotin synthase (370 aa).

The 236-residue stretch at 79 to 314 (CCGNVVDLCS…KQIIRYAGGR (236 aa)) folds into the Radical SAM core domain. 3 residues coordinate [4Fe-4S] cluster: Cys97, Cys101, and Cys104. [2Fe-2S] cluster-binding residues include Cys142, Cys179, Cys239, and Arg309.

Belongs to the radical SAM superfamily. Biotin synthase family. Homodimer. The cofactor is [4Fe-4S] cluster. It depends on [2Fe-2S] cluster as a cofactor.

It carries out the reaction (4R,5S)-dethiobiotin + (sulfur carrier)-SH + 2 reduced [2Fe-2S]-[ferredoxin] + 2 S-adenosyl-L-methionine = (sulfur carrier)-H + biotin + 2 5'-deoxyadenosine + 2 L-methionine + 2 oxidized [2Fe-2S]-[ferredoxin]. It functions in the pathway cofactor biosynthesis; biotin biosynthesis; biotin from 7,8-diaminononanoate: step 2/2. In terms of biological role, catalyzes the conversion of dethiobiotin (DTB) to biotin by the insertion of a sulfur atom into dethiobiotin via a radical-based mechanism. The protein is Biotin synthase of Trichodesmium erythraeum (strain IMS101).